We begin with the raw amino-acid sequence, 372 residues long: Alanine racemase (372 aa).

The active-site Proton acceptor; specific for D-alanine is the lysine 35. Lysine 35 carries the N6-(pyridoxal phosphate)lysine modification. Arginine 143 contributes to the substrate binding site. Tyrosine 268 functions as the Proton acceptor; specific for L-alanine in the catalytic mechanism. Substrate is bound at residue methionine 316.

The protein belongs to the alanine racemase family. Pyridoxal 5'-phosphate serves as cofactor.

It catalyses the reaction L-alanine = D-alanine. The protein operates within amino-acid biosynthesis; D-alanine biosynthesis; D-alanine from L-alanine: step 1/1. Functionally, catalyzes the interconversion of L-alanine and D-alanine. May also act on other amino acids. This Shewanella frigidimarina (strain NCIMB 400) protein is Alanine racemase (alr).